A 238-amino-acid chain; its full sequence is Fatty acid metabolism regulator protein (238 aa).

The HTH gntR-type domain maps to 6–74 (KGPASFAEKY…HGKPTRVNNF (69 aa)). The H-T-H motif DNA-binding region spans 34 to 53 (ERELSELIGVTRTTLREVLQ).

Homodimer.

It is found in the cytoplasm. Functionally, multifunctional regulator of fatty acid metabolism. The polypeptide is Fatty acid metabolism regulator protein (Shewanella baltica (strain OS185)).